Here is a 255-residue protein sequence, read N- to C-terminus: UPF0246 protein CC_3385 (255 aa).

This sequence belongs to the UPF0246 family.

The protein is UPF0246 protein CC_3385 of Caulobacter vibrioides (strain ATCC 19089 / CIP 103742 / CB 15) (Caulobacter crescentus).